Consider the following 204-residue polypeptide: Outer-membrane lipoprotein LolB (204 aa).

A signal peptide spans 1 to 20 (MLRSRRLALLCLATPLWLAA). Cysteine 21 carries N-palmitoyl cysteine lipidation. A lipid anchor (S-diacylglycerol cysteine) is attached at cysteine 21. Residues 131 to 150 (GRAAPGTPSNVTRDANGRPD) form a disordered region.

It belongs to the LolB family. As to quaternary structure, monomer.

Its subcellular location is the cell outer membrane. In terms of biological role, plays a critical role in the incorporation of lipoproteins in the outer membrane after they are released by the LolA protein. The sequence is that of Outer-membrane lipoprotein LolB from Cupriavidus metallidurans (strain ATCC 43123 / DSM 2839 / NBRC 102507 / CH34) (Ralstonia metallidurans).